The sequence spans 474 residues: Cyclin-dependent kinase 18 (474 aa).

Residues serine 14, serine 74, serine 89, serine 98, serine 117, and serine 132 each carry the phosphoserine modification. Residues 44–87 form a disordered region; that stretch reads DLQLGPLGRDPLQECSTFSPTDSGEEPGQLSPGVQFQRRQNQRR. A Protein kinase domain is found at 144-425; that stretch reads YVKLDKLGEG…AEAALSHPYF (282 aa). Residues 150–158 and lysine 173 each bind ATP; that span reads LGEGTYATV. The active-site Proton acceptor is aspartate 265. 2 positions are modified to phosphoserine: serine 440 and serine 443.

It belongs to the protein kinase superfamily. CMGC Ser/Thr protein kinase family. CDC2/CDKX subfamily.

It catalyses the reaction L-seryl-[protein] + ATP = O-phospho-L-seryl-[protein] + ADP + H(+). The catalysed reaction is L-threonyl-[protein] + ATP = O-phospho-L-threonyl-[protein] + ADP + H(+). May play a role in signal transduction cascades in terminally differentiated cells. In Pongo abelii (Sumatran orangutan), this protein is Cyclin-dependent kinase 18 (CDK18).